Consider the following 262-residue polypeptide: Mediator of RNA polymerase II transcription subunit 8 (262 aa).

A coiled-coil region spans residues 168 to 211 (LEEKEMGVKNVITGLKRQLDEGDEEDEEEEEEEEDMQGEEMEVV). The disordered stretch occupies residues 183 to 206 (KRQLDEGDEEDEEEEEEEEDMQGE). A compositionally biased stretch (acidic residues) spans 188–206 (EGDEEDEEEEEEEEDMQGE).

Belongs to the Mediator complex subunit 8 family. As to quaternary structure, component of the Mediator complex.

The protein localises to the nucleus. Functionally, component of the Mediator complex, a coactivator involved in the regulated transcription of nearly all RNA polymerase II-dependent genes. Mediator functions as a bridge to convey information from gene-specific regulatory proteins to the basal RNA polymerase II transcription machinery. Mediator is recruited to promoters by direct interactions with regulatory proteins and serves as a scaffold for the assembly of a functional preinitiation complex with RNA polymerase II and the general transcription factors. The sequence is that of Mediator of RNA polymerase II transcription subunit 8 (MED8) from Coccidioides immitis (strain RS) (Valley fever fungus).